We begin with the raw amino-acid sequence, 486 residues long: Flavin-dependent monooxygenase pboD (486 aa).

Residues Asp51, Gly65, and Arg124 each contribute to the FAD site. The active site involves Arg203. The FAD site is built by Asp344 and Gly357.

The protein belongs to the paxM FAD-dependent monooxygenase family. FAD is required as a cofactor.

It functions in the pathway secondary metabolite biosynthesis. Functionally, flavin-dependent monooxygenase; part of the gene cluster that mediates the biosynthesis of protubonine B, a hydroxylated and diacetylated cyclo-L-Trp-L-Leu derivative. Within the pathway, pboD catalyzes the hydroxylation at C-3 of the indole ring of cyclo-L-Trp-L-Leu and subsequent formation of the pyrrolidine ring, eading to the production of protubonine D. PboD is also able to accept other cyclodipeptides (CDPs) as substrates, including cyclo-L-Trp-L-Trp, cyclo-L-Trp-L-Tyr, cyclo-L-Trp-L-Phe, cyclo-L-Trp-L-Met, cyclo-L-Trp-L-Ala, cyclo-L-Trp-L-Pro and cyclo-L-Trp-Gly. Assays with cyclo-L-Trp-L-Trp, cyclo-L-Trp-L-Tyr, cyclo-L-Trp-L-Phe show similar or even slightly higher conversion yields, compared with that of the natural substrate cyclo-L-Trp-L-Leu, whereas cyclo-L-Trp-L-Pro and cyclo-L-Trp-Gly are accepted by PboD but only with conversion yields of 10 and 4%, respectively. Cyclo-L-Trp-L-His is not accepted as a substrate. The first step of the protubonine B synthesis is performed by the nonribosomal peptide synthetase pboA that catalyzes the formation of cyclo-L-Trp-L-Leu by condensing L-Leu with L-Trp. The flavin-dependent monooxygenase pboD is responsible for hydroxylation at C-3 of the indole ring and subsequent formation of the pyrrolidine ring, leadind to protubonine D. Protubonine D is further diacetylated by two acetyltransferases, pboB and pboC, to form the final product protubonine B via protubonine C. This chain is Flavin-dependent monooxygenase pboD, found in Aspergillus ustus.